The following is a 590-amino-acid chain: NADH-ubiquinone oxidoreductase chain 5 (590 aa).

A run of 15 helical transmembrane segments spans residues 1–21 (MNLI…MSIM), 31–51 (LMVL…NNEL), 77–97 (LLFT…SLWY), 104–124 (INKF…IITA), 130–150 (LFIG…WWHG), 167–187 (IGDI…SINM), 190–210 (LMIQ…AAAT), 230–250 (TPVS…FLLI), 261–281 (IMLT…AAAA), 314–336 (AFLH…GSYI), 355–375 (LPMT…MPFL), 398–418 (IMIT…IMLF), 439–461 (HPLA…STLQ), 466–486 (VTMP…GVLL), and 568–588 (MIKN…LFIM).

It belongs to the complex I subunit 5 family.

It localises to the mitochondrion inner membrane. It carries out the reaction a ubiquinone + NADH + 5 H(+)(in) = a ubiquinol + NAD(+) + 4 H(+)(out). Its function is as follows. Core subunit of the mitochondrial membrane respiratory chain NADH dehydrogenase (Complex I) that is believed to belong to the minimal assembly required for catalysis. Complex I functions in the transfer of electrons from NADH to the respiratory chain. The immediate electron acceptor for the enzyme is believed to be ubiquinone. The polypeptide is NADH-ubiquinone oxidoreductase chain 5 (MT-ND5) (Lycodon semicarinatus (Ryukyu odd-tooth snake)).